Reading from the N-terminus, the 1748-residue chain is Anaphase-promoting complex subunit 1 (1748 aa).

Disordered stretches follow at residues 1–24 and 1435–1479; these read MTSK…YTGD and VSGV…DPTA. The span at 1435-1450 shows a compositional bias: polar residues; sequence VSGVTQVTSNTNTPGN. Basic and acidic residues predominate over residues 1451–1468; the sequence is SDRERVDETAASLDDERS. Phosphoserine is present on serine 1462.

This sequence belongs to the APC1 family. As to quaternary structure, the APC/C is composed of at least 13 subunits that stay tightly associated throughout the cell cycle: APC1, APC2, APC4, APC5, APC9, APC11, CDC16, CDC23, CDC26, CDC27, DOC1, MND2 and SWM1. APC1 interacts directly with MND2.

It localises to the nucleus. The protein localises to the cytoplasm. The protein resides in the cytoskeleton. It is found in the spindle pole. It participates in protein modification; protein ubiquitination. Its function is as follows. Component of the anaphase promoting complex/cyclosome (APC/C), a cell cycle-regulated E3 ubiquitin-protein ligase complex that controls progression through mitosis and the G1 phase of the cell cycle. The APC/C is thought to confer substrate specificity and, in the presence of ubiquitin-conjugating E2 enzymes, it catalyzes the formation of protein-ubiquitin conjugates that are subsequently degraded by the 26S proteasome. In early mitosis, the APC/C is activated by CDC20 and targets securin PDS1, the B-type cyclin CLB5, and other anaphase inhibitory proteins for proteolysis, thereby triggering the separation of sister chromatids at the metaphase-to-anaphase transition. In late mitosis and in G1, degradation of CLB5 allows activation of the APC/C by CDH1, which is needed to destroy CDC20 and the B-type cyclin CLB2 to allow exit from mitosis and creating the low CDK state necessary for cytokinesis and for reforming prereplicative complexes in G1 prior to another round of replication. The protein is Anaphase-promoting complex subunit 1 (APC1) of Saccharomyces cerevisiae (strain ATCC 204508 / S288c) (Baker's yeast).